The chain runs to 525 residues: Protein-serine O-palmitoleoyltransferase porcupine (525 aa).

The next 9 membrane-spanning stretches (helical) occupy residues 83 to 103 (VMQYVAPMLLLCLLCRLLCLL), 125 to 145 (LIILQITVGYRLLLLLLLAAV), 159 to 179 (GAQVLAVLTVGSQFLYELLIW), 220 to 240 (FAYLGYIYSPATCALGPWVSF), 260 to 280 (LLPNVVICVLAVTVSNCVAPA), 301 to 318 (VRSSHYFVGMMAQALLVA), 395 to 415 (SLLHGMDLRIYLVLISLAFLA), 467 to 487 (NLAFTALAIFHLAYLGVVLLG), and 505 to 525 (QAGYLSHYIGLGTFVLYLFIS). Residue H398 is part of the active site.

It belongs to the membrane-bound acyltransferase family. Porcupine subfamily. In terms of assembly, interacts with wg and Wnt5.

It localises to the endoplasmic reticulum membrane. It carries out the reaction [Wnt protein]-L-serine + (9Z)-hexadecenoyl-CoA = [Wnt protein]-O-(9Z)-hexadecenoyl-L-serine + CoA. Functionally, protein-serine O-palmitoleoyltransferase that acts as a key regulator of the Wnt signaling pathway by mediating the attachment of palmitoleate, a 16-carbon monounsaturated fatty acid (C16:1(9Z)), to Wnt proteins. Serine palmitoleoylation of Wnt proteins is required for efficient binding to frizzled receptors. Also facilitates the glycosylation of Wnt family members, including wg and Wnt5. The cotranslational disulfide bond formation of wg competes with the N-glycosylation. Porc stimulates the post-translational N-glycosylation by anchoring wg at the ER membrane, probably through acylation. This is Protein-serine O-palmitoleoyltransferase porcupine from Drosophila melanogaster (Fruit fly).